The sequence spans 464 residues: ATP synthase subunit beta (464 aa).

ATP is bound at residue 153 to 160; that stretch reads GGAGVGKT.

This sequence belongs to the ATPase alpha/beta chains family. F-type ATPases have 2 components, CF(1) - the catalytic core - and CF(0) - the membrane proton channel. CF(1) has five subunits: alpha(3), beta(3), gamma(1), delta(1), epsilon(1). CF(0) has three main subunits: a(1), b(2) and c(9-12). The alpha and beta chains form an alternating ring which encloses part of the gamma chain. CF(1) is attached to CF(0) by a central stalk formed by the gamma and epsilon chains, while a peripheral stalk is formed by the delta and b chains.

The protein localises to the cell membrane. It catalyses the reaction ATP + H2O + 4 H(+)(in) = ADP + phosphate + 5 H(+)(out). Its function is as follows. Produces ATP from ADP in the presence of a proton gradient across the membrane. The catalytic sites are hosted primarily by the beta subunits. This Alkaliphilus metalliredigens (strain QYMF) protein is ATP synthase subunit beta.